A 77-amino-acid polypeptide reads, in one-letter code: MATVIRLTKMGRKKKPFYRIVVTDSRKKRDGGWIESLGYYNPLVEPALVKYDAQRLEYWKNVGAKMSERVAKLTSKK.

This sequence belongs to the bacterial ribosomal protein bS16 family.

This is Small ribosomal subunit protein bS16 from Helicobacter hepaticus (strain ATCC 51449 / 3B1).